A 496-amino-acid polypeptide reads, in one-letter code: Flt3-interacting zinc finger protein 1 (496 aa).

Met-1 bears the N-acetylmethionine mark. C2H2-type zinc fingers lie at residues 23 to 45 (FHCS…FARH), 51 to 73 (HACP…LRSH), 79 to 101 (YRCS…QVVH), 107 to 130 (YCCL…KRQH), 200 to 222 (FACG…WAAH), and 228 to 250 (FKCP…KLTH). The tract at residues 250–280 (HDLQGPGAPPAQAWAAGPGAGPETAGEGTAA) is disordered. Residues 259–280 (PAQAWAAGPGAGPETAGEGTAA) show a composition bias toward low complexity. 5 C2H2-type zinc fingers span residues 331-352 (YQCD…LEAH), 358-381 (YGCG…RVSH), 414-436 (FGCS…VLVH), 442-464 (FPCL…RLLH), and 470-492 (FPCH…LKLH). Residues 378–412 (RVSHGEGGGEEAATAAREREPASGEPPSGSGRGKK) form a disordered region.

In terms of assembly, interacts with FLT3 cytoplasmic catalytic domain, following receptor stimulation, in a kinase-independent manner. Does not interact with other structurally related receptor tyrosine kinases, including KIT, CSF1R and PDGFR. Interacts with NRL. As to expression, widely expressed.

It is found in the cytoplasm. The protein resides in the nucleus. Functionally, may be a transcriptional repressor of NRL function in photoreceptors. Does not repress CRX-mediated transactivation. The protein is Flt3-interacting zinc finger protein 1 (FIZ1) of Homo sapiens (Human).